The primary structure comprises 132 residues: MSMSDPIADFLTRIRNANMAQHESVEAPASKMKKDIAEILKNEGFIRDVEYVDDNKQGIIRVFLKYGNDGQRVISGLKRISKPGLRTYVKSDAVPKVLNGLGIAIISTSEGVVTDKVARAKKIGGEVIAYVW.

It belongs to the universal ribosomal protein uS8 family. As to quaternary structure, part of the 30S ribosomal subunit. Contacts proteins S5 and S12.

Functionally, one of the primary rRNA binding proteins, it binds directly to 16S rRNA central domain where it helps coordinate assembly of the platform of the 30S subunit. This is Small ribosomal subunit protein uS8 from Limosilactobacillus reuteri (strain DSM 20016) (Lactobacillus reuteri).